A 217-amino-acid polypeptide reads, in one-letter code: ATP-dependent Clp protease proteolytic subunit 2 (217 aa).

Ser-113 acts as the Nucleophile in catalysis. Residue His-138 is part of the active site.

Belongs to the peptidase S14 family. As to quaternary structure, fourteen ClpP subunits assemble into 2 heptameric rings which stack back to back to give a disk-like structure with a central cavity, resembling the structure of eukaryotic proteasomes.

It is found in the cytoplasm. It carries out the reaction Hydrolysis of proteins to small peptides in the presence of ATP and magnesium. alpha-casein is the usual test substrate. In the absence of ATP, only oligopeptides shorter than five residues are hydrolyzed (such as succinyl-Leu-Tyr-|-NHMec, and Leu-Tyr-Leu-|-Tyr-Trp, in which cleavage of the -Tyr-|-Leu- and -Tyr-|-Trp bonds also occurs).. In terms of biological role, cleaves peptides in various proteins in a process that requires ATP hydrolysis. Has a chymotrypsin-like activity. Plays a major role in the degradation of misfolded proteins. The polypeptide is ATP-dependent Clp protease proteolytic subunit 2 (Frankia casuarinae (strain DSM 45818 / CECT 9043 / HFP020203 / CcI3)).